The following is a 144-amino-acid chain: Maximins 5/H4 type 3 (144 aa).

The N-terminal stretch at 1–18 is a signal peptide; that stretch reads MNFKYIVAVSFLIASAYA. 2 consecutive propeptides follow at residues 19–43 and 74–123; these read RSVQNDEQSLSQRDVLEEESLREIR and TAED…KEKR. Leucine amide is present on L143.

The protein belongs to the bombinin family. In terms of tissue distribution, expressed by the skin glands.

It localises to the secreted. In terms of biological role, maximin-5 shows antibacterial activity against both Gram-positive and Gram-negative bacteria. The only exception is the resistance of E.coli. Also shows antimicrobial activity against fungi C.albicans, A.flavus and P.uticale. It has little hemolytic activity. It does not possess a significant cytotoxicity against tumor cell lines. It does not possess a significant anti-HIV activity. Maximin-H4 shows antibacterial activity against both Gram-positive and Gram-negative bacteria. It also shows antimicrobial activity against the fungus C.albicans. Shows strong hemolytic activity. This chain is Maximins 5/H4 type 3, found in Bombina maxima (Giant fire-bellied toad).